The primary structure comprises 225 residues: Phosphoribosylformylglycinamidine synthase subunit PurQ (225 aa).

The 221-residue stretch at 5 to 225 (RFGIVVFPGS…WQSIVQSLAG (221 aa)) folds into the Glutamine amidotransferase type-1 domain. Cys-89 (nucleophile) is an active-site residue. Residues His-198 and Glu-200 contribute to the active site.

Part of the FGAM synthase complex composed of 1 PurL, 1 PurQ and 2 PurS subunits.

Its subcellular location is the cytoplasm. The catalysed reaction is N(2)-formyl-N(1)-(5-phospho-beta-D-ribosyl)glycinamide + L-glutamine + ATP + H2O = 2-formamido-N(1)-(5-O-phospho-beta-D-ribosyl)acetamidine + L-glutamate + ADP + phosphate + H(+). The enzyme catalyses L-glutamine + H2O = L-glutamate + NH4(+). It functions in the pathway purine metabolism; IMP biosynthesis via de novo pathway; 5-amino-1-(5-phospho-D-ribosyl)imidazole from N(2)-formyl-N(1)-(5-phospho-D-ribosyl)glycinamide: step 1/2. Part of the phosphoribosylformylglycinamidine synthase complex involved in the purines biosynthetic pathway. Catalyzes the ATP-dependent conversion of formylglycinamide ribonucleotide (FGAR) and glutamine to yield formylglycinamidine ribonucleotide (FGAM) and glutamate. The FGAM synthase complex is composed of three subunits. PurQ produces an ammonia molecule by converting glutamine to glutamate. PurL transfers the ammonia molecule to FGAR to form FGAM in an ATP-dependent manner. PurS interacts with PurQ and PurL and is thought to assist in the transfer of the ammonia molecule from PurQ to PurL. This Synechococcus sp. (strain JA-3-3Ab) (Cyanobacteria bacterium Yellowstone A-Prime) protein is Phosphoribosylformylglycinamidine synthase subunit PurQ.